A 316-amino-acid chain; its full sequence is Biotin synthase (316 aa).

The region spanning 36–264 (FDNRITLCAI…TATLRICGGR (229 aa)) is the Radical SAM core domain. Residues Cys-53, Cys-57, and Cys-60 each contribute to the [4Fe-4S] cluster site. [2Fe-2S] cluster contacts are provided by Cys-129, Cys-189, and Arg-259.

It belongs to the radical SAM superfamily. Biotin synthase family. As to quaternary structure, homodimer. The cofactor is [4Fe-4S] cluster. [2Fe-2S] cluster is required as a cofactor.

It carries out the reaction (4R,5S)-dethiobiotin + (sulfur carrier)-SH + 2 reduced [2Fe-2S]-[ferredoxin] + 2 S-adenosyl-L-methionine = (sulfur carrier)-H + biotin + 2 5'-deoxyadenosine + 2 L-methionine + 2 oxidized [2Fe-2S]-[ferredoxin]. It functions in the pathway cofactor biosynthesis; biotin biosynthesis; biotin from 7,8-diaminononanoate: step 2/2. Catalyzes the conversion of dethiobiotin (DTB) to biotin by the insertion of a sulfur atom into dethiobiotin via a radical-based mechanism. The protein is Biotin synthase of Desulfovibrio desulfuricans (strain ATCC 27774 / DSM 6949 / MB).